Consider the following 262-residue polypeptide: Octanoyltransferase (262 aa).

The BPL/LPL catalytic domain occupies 41–232; the sequence is PQLPDGLLLL…SFCQVFGLQA (192 aa). Residues 96–103, 163–165, and 176–178 contribute to the substrate site; these read RGGEVTYH, AIG, and GFA. The Acyl-thioester intermediate role is filled by Cys194.

It belongs to the LipB family.

Its subcellular location is the cytoplasm. The enzyme catalyses octanoyl-[ACP] + L-lysyl-[protein] = N(6)-octanoyl-L-lysyl-[protein] + holo-[ACP] + H(+). It participates in protein modification; protein lipoylation via endogenous pathway; protein N(6)-(lipoyl)lysine from octanoyl-[acyl-carrier-protein]: step 1/2. Its function is as follows. Catalyzes the transfer of endogenously produced octanoic acid from octanoyl-acyl-carrier-protein onto the lipoyl domains of lipoate-dependent enzymes. Lipoyl-ACP can also act as a substrate although octanoyl-ACP is likely to be the physiological substrate. This chain is Octanoyltransferase, found in Synechococcus sp. (strain JA-2-3B'a(2-13)) (Cyanobacteria bacterium Yellowstone B-Prime).